The following is an 85-amino-acid chain: Small ribosomal subunit protein uS17 (85 aa).

The protein belongs to the universal ribosomal protein uS17 family. Part of the 30S ribosomal subunit.

In terms of biological role, one of the primary rRNA binding proteins, it binds specifically to the 5'-end of 16S ribosomal RNA. This is Small ribosomal subunit protein uS17 from Desulforapulum autotrophicum (strain ATCC 43914 / DSM 3382 / VKM B-1955 / HRM2) (Desulfobacterium autotrophicum).